An 884-amino-acid polypeptide reads, in one-letter code: Protein P (884 aa).

The segment at 1–184 is terminal protein domain (TP); sequence MHPFSRLFRN…GKPYSWEHRQ (184 aa). The segment at 185–387 is spacer; the sequence is LVQHNGQQHK…YCIHHIVSSL (203 aa). Residues 299-345 are disordered; it reads RNSGHTTWFSSASNSNKSRSREKAYSSNSTSKRYSPPLNYEKSDFSS. The segment at 388-729 is polymerase/reverse transcriptase domain (RT); that stretch reads DDWGPCTVTG…YEELWPVVRQ (342 aa). The 242-residue stretch at 398-639 folds into the Reverse transcriptase domain; that stretch reads DVTIKSPRTP…NHLHFMGYVI (242 aa). 3 residues coordinate Mg(2+): aspartate 470, aspartate 590, and aspartate 591.

This sequence belongs to the hepadnaviridae P protein family.

It catalyses the reaction DNA(n) + a 2'-deoxyribonucleoside 5'-triphosphate = DNA(n+1) + diphosphate. The enzyme catalyses Endonucleolytic cleavage to 5'-phosphomonoester.. Activated by host HSP70 and HSP40 in vitro to be able to bind the epsilon loop of the pgRNA. Because deletion of the RNase H region renders the protein partly chaperone-independent, the chaperones may be needed indirectly to relieve occlusion of the RNA-binding site by this domain. Inhibited by several reverse-transcriptase inhibitors: Lamivudine, Adefovir and Entecavir. Functionally, multifunctional enzyme that converts the viral RNA genome into dsDNA in viral cytoplasmic capsids. This enzyme displays a DNA polymerase activity that can copy either DNA or RNA templates, and a ribonuclease H (RNase H) activity that cleaves the RNA strand of RNA-DNA heteroduplexes in a partially processive 3'- to 5'-endonucleasic mode. Neo-synthesized pregenomic RNA (pgRNA) are encapsidated together with the P protein, and reverse-transcribed inside the nucleocapsid. Initiation of reverse-transcription occurs first by binding the epsilon loop on the pgRNA genome, and is initiated by protein priming, thereby the 5'-end of (-)DNA is covalently linked to P protein. Partial (+)DNA is synthesized from the (-)DNA template and generates the relaxed circular DNA (RC-DNA) genome. After budding and infection, the RC-DNA migrates in the nucleus, and is converted into a plasmid-like covalently closed circular DNA (cccDNA). The activity of P protein does not seem to be necessary for cccDNA generation, and is presumably released from (+)DNA by host nuclear DNA repair machinery. The polypeptide is Protein P (Woodchuck hepatitis B virus (isolate 7) (WHV)).